A 98-amino-acid chain; its full sequence is NADH-ubiquinone oxidoreductase chain 4L (98 aa).

3 helical membrane passes run 1-21 (MSMVYINIFLAFTLSFMGLLI), 29-49 (SLLCLEGMMLSLFVLMTVTIL), and 61-81 (IILLVFAACEAALGLSLLVMV).

It belongs to the complex I subunit 4L family. In terms of assembly, core subunit of respiratory chain NADH dehydrogenase (Complex I) which is composed of 45 different subunits.

The protein localises to the mitochondrion inner membrane. The enzyme catalyses a ubiquinone + NADH + 5 H(+)(in) = a ubiquinol + NAD(+) + 4 H(+)(out). In terms of biological role, core subunit of the mitochondrial membrane respiratory chain NADH dehydrogenase (Complex I) which catalyzes electron transfer from NADH through the respiratory chain, using ubiquinone as an electron acceptor. Part of the enzyme membrane arm which is embedded in the lipid bilayer and involved in proton translocation. The protein is NADH-ubiquinone oxidoreductase chain 4L (MT-ND4L) of Taxidea taxus (American badger).